The chain runs to 156 residues: Cyanate hydratase (156 aa).

Active-site residues include R96, E99, and S122.

It belongs to the cyanase family.

It catalyses the reaction cyanate + hydrogencarbonate + 3 H(+) = NH4(+) + 2 CO2. In terms of biological role, catalyzes the reaction of cyanate with bicarbonate to produce ammonia and carbon dioxide. This Pseudomonas entomophila (strain L48) protein is Cyanate hydratase.